We begin with the raw amino-acid sequence, 237 residues long: Phosphoadenosine 5'-phosphosulfate reductase (237 aa).

Cysteine 231 acts as the Nucleophile; cysteine thiosulfonate intermediate in catalysis.

This sequence belongs to the PAPS reductase family. CysH subfamily.

The protein localises to the cytoplasm. It catalyses the reaction [thioredoxin]-disulfide + sulfite + adenosine 3',5'-bisphosphate + 2 H(+) = [thioredoxin]-dithiol + 3'-phosphoadenylyl sulfate. It participates in sulfur metabolism; hydrogen sulfide biosynthesis; sulfite from sulfate: step 3/3. Its function is as follows. Catalyzes the formation of sulfite from phosphoadenosine 5'-phosphosulfate (PAPS) using thioredoxin as an electron donor. The polypeptide is Phosphoadenosine 5'-phosphosulfate reductase (Xylella fastidiosa (strain M12)).